Consider the following 408-residue polypeptide: LL-diaminopimelate aminotransferase (408 aa).

Substrate-binding residues include Tyr-15 and Gly-42. Residues Tyr-72, 108–109 (SK), Tyr-132, Asn-187, Tyr-218, and 246–248 (SFS) each bind pyridoxal 5'-phosphate. Positions 109, 132, and 187 each coordinate substrate. N6-(pyridoxal phosphate)lysine is present on Lys-249. Pyridoxal 5'-phosphate is bound by residues Arg-257 and Asn-292. 2 residues coordinate substrate: Asn-292 and Arg-388.

Belongs to the class-I pyridoxal-phosphate-dependent aminotransferase family. LL-diaminopimelate aminotransferase subfamily. Homodimer. Requires pyridoxal 5'-phosphate as cofactor.

The catalysed reaction is (2S,6S)-2,6-diaminopimelate + 2-oxoglutarate = (S)-2,3,4,5-tetrahydrodipicolinate + L-glutamate + H2O + H(+). It functions in the pathway amino-acid biosynthesis; L-lysine biosynthesis via DAP pathway; LL-2,6-diaminopimelate from (S)-tetrahydrodipicolinate (aminotransferase route): step 1/1. Its function is as follows. Involved in the synthesis of meso-diaminopimelate (m-DAP or DL-DAP), required for both lysine and peptidoglycan biosynthesis. Catalyzes the direct conversion of tetrahydrodipicolinate to LL-diaminopimelate. The chain is LL-diaminopimelate aminotransferase from Synechococcus sp. (strain CC9902).